Here is a 345-residue protein sequence, read N- to C-terminus: Isopentenyl-diphosphate delta-isomerase (345 aa).

Residue 6-7 coordinates substrate; it reads RK. Residues 63–65, S93, and N122 contribute to the FMN site; that span reads SMT. 93-95 contacts substrate; it reads SQR. Q156 provides a ligand contact to substrate. E157 lines the Mg(2+) pocket. Residues K188, T218, 265-267, and 286-287 contribute to the FMN site; these read GLR and AL.

Belongs to the IPP isomerase type 2 family. Homooctamer. Dimer of tetramers. The cofactor is FMN. NADPH is required as a cofactor. It depends on Mg(2+) as a cofactor.

It is found in the cytoplasm. It carries out the reaction isopentenyl diphosphate = dimethylallyl diphosphate. Functionally, involved in the biosynthesis of isoprenoids. Catalyzes the 1,3-allylic rearrangement of the homoallylic substrate isopentenyl (IPP) to its allylic isomer, dimethylallyl diphosphate (DMAPP). The sequence is that of Isopentenyl-diphosphate delta-isomerase from Archaeoglobus fulgidus (strain ATCC 49558 / DSM 4304 / JCM 9628 / NBRC 100126 / VC-16).